Reading from the N-terminus, the 68-residue chain is ATP synthase protein 8 (68 aa).

A helical transmembrane segment spans residues 8 to 24 (VWPTIIMSMLLALFLLM). Lys54 bears the N6-acetyllysine; alternate mark. Position 54 is an N6-succinyllysine; alternate (Lys54). Residue Lys57 is modified to N6-acetyllysine.

Belongs to the ATPase protein 8 family. As to quaternary structure, F-type ATPases have 2 components, CF(1) - the catalytic core - and CF(0) - the membrane proton channel. Component of an ATP synthase complex composed of ATP5PB, ATP5MC1, ATP5F1E, ATP5PD, ATP5ME, ATP5PF, ATP5MF, MT-ATP6, MT-ATP8, ATP5F1A, ATP5F1B, ATP5F1D, ATP5F1C, ATP5PO, ATP5MG, ATP5MK and ATP5MJ. Interacts with PRICKLE3.

It localises to the mitochondrion membrane. Mitochondrial membrane ATP synthase (F(1)F(0) ATP synthase or Complex V) produces ATP from ADP in the presence of a proton gradient across the membrane which is generated by electron transport complexes of the respiratory chain. F-type ATPases consist of two structural domains, F(1) - containing the extramembraneous catalytic core and F(0) - containing the membrane proton channel, linked together by a central stalk and a peripheral stalk. During catalysis, ATP synthesis in the catalytic domain of F(1) is coupled via a rotary mechanism of the central stalk subunits to proton translocation. Part of the complex F(0) domain. Minor subunit located with subunit a in the membrane. The chain is ATP synthase protein 8 (MT-ATP8) from Hylobates lar (Lar gibbon).